We begin with the raw amino-acid sequence, 495 residues long: Glycogen synthase (495 aa).

Lys-15 lines the ADP-alpha-D-glucose pocket.

Belongs to the glycosyltransferase 1 family. Bacterial/plant glycogen synthase subfamily.

It carries out the reaction [(1-&gt;4)-alpha-D-glucosyl](n) + ADP-alpha-D-glucose = [(1-&gt;4)-alpha-D-glucosyl](n+1) + ADP + H(+). It participates in glycan biosynthesis; glycogen biosynthesis. In terms of biological role, synthesizes alpha-1,4-glucan chains using ADP-glucose. The polypeptide is Glycogen synthase (Variovorax paradoxus (strain S110)).